A 74-amino-acid chain; its full sequence is Conotoxin VnMEKL-0221 (74 aa).

An N-terminal signal peptide occupies residues 1-19 (MEKLTILLLVAAVLMWTQA). Positions 20-46 (LIQEKRPKEKIKFLSKRKTTAESWWEG) are excised as a propeptide. 3 disulfide bridges follow: C48–C62, C55–C66, and C61–C71.

The protein belongs to the conotoxin O2 superfamily. In terms of tissue distribution, expressed by the venom duct.

It localises to the secreted. The chain is Conotoxin VnMEKL-0221 from Conus ventricosus (Mediterranean cone).